Consider the following 209-residue polypeptide: Small ribosomal subunit protein uS3 (209 aa).

The 70-residue stretch at 38-107 folds into the KH type-2 domain; the sequence is IRNFIKKNYN…KFGIDIIELK (70 aa).

The protein belongs to the universal ribosomal protein uS3 family. In terms of assembly, part of the 30S ribosomal subunit. Forms a tight complex with proteins S10 and S14.

Its function is as follows. Binds the lower part of the 30S subunit head. Binds mRNA in the 70S ribosome, positioning it for translation. This chain is Small ribosomal subunit protein uS3, found in Fervidobacterium nodosum (strain ATCC 35602 / DSM 5306 / Rt17-B1).